Here is a 363-residue protein sequence, read N- to C-terminus: Insulin gene enhancer protein ISL-3 (363 aa).

2 LIM zinc-binding domains span residues Cys27–Asp80 and Cys89–His143. Residues Thr191 to Ser250 constitute a DNA-binding region (homeobox). Positions Phe328–Thr363 are disordered. The segment covering Ser329 to Ser340 has biased composition (low complexity). A compositionally biased stretch (polar residues) spans Asp341 to Thr363.

The protein resides in the nucleus. Functionally, binds to one of the cis-acting domain of the insulin gene enhancer. May be involved in subtype specialization of primary motoneurons. This Oncorhynchus tshawytscha (Chinook salmon) protein is Insulin gene enhancer protein ISL-3 (isl3).